Reading from the N-terminus, the 156-residue chain is Ribosomal RNA large subunit methyltransferase H (156 aa).

Residues leucine 73, glycine 104, and 123-128 (LSALTL) contribute to the S-adenosyl-L-methionine site.

Belongs to the RNA methyltransferase RlmH family. Homodimer.

It localises to the cytoplasm. The enzyme catalyses pseudouridine(1915) in 23S rRNA + S-adenosyl-L-methionine = N(3)-methylpseudouridine(1915) in 23S rRNA + S-adenosyl-L-homocysteine + H(+). Functionally, specifically methylates the pseudouridine at position 1915 (m3Psi1915) in 23S rRNA. The protein is Ribosomal RNA large subunit methyltransferase H of Shewanella loihica (strain ATCC BAA-1088 / PV-4).